We begin with the raw amino-acid sequence, 483 residues long: Protein disulfide-isomerase 5-3 (483 aa).

N-linked (GlcNAc...) asparagine glycosylation is found at Asn53, Asn74, and Asn99. Residues 133–263 (EETKEEFPDG…IVKMVEGLVA (131 aa)) enclose the Thioredoxin domain. Cys170 functions as the Nucleophile in the catalytic mechanism. 3 N-linked (GlcNAc...) asparagine glycosylation sites follow: Asn279, Asn326, and Asn376. A helical transmembrane segment spans residues 442–462 (FSHFITNLCAIIGGVFTVAGI).

The protein belongs to the protein disulfide isomerase family. In terms of tissue distribution, widely expressed.

The protein localises to the membrane. Acts as a protein-folding catalyst that interacts with nascent polypeptides to catalyze the formation, isomerization, and reduction or oxidation of disulfide bonds. The sequence is that of Protein disulfide-isomerase 5-3 (PDIL5-3) from Arabidopsis thaliana (Mouse-ear cress).